The sequence spans 463 residues: ATP-dependent protease ATPase subunit HslU (463 aa).

Residues valine 21, 63–68 (GVGKTE), aspartate 276, glutamate 341, and arginine 413 contribute to the ATP site.

This sequence belongs to the ClpX chaperone family. HslU subfamily. As to quaternary structure, a double ring-shaped homohexamer of HslV is capped on each side by a ring-shaped HslU homohexamer. The assembly of the HslU/HslV complex is dependent on binding of ATP.

It localises to the cytoplasm. In terms of biological role, ATPase subunit of a proteasome-like degradation complex; this subunit has chaperone activity. The binding of ATP and its subsequent hydrolysis by HslU are essential for unfolding of protein substrates subsequently hydrolyzed by HslV. HslU recognizes the N-terminal part of its protein substrates and unfolds these before they are guided to HslV for hydrolysis. The protein is ATP-dependent protease ATPase subunit HslU of Thermotoga sp. (strain RQ2).